We begin with the raw amino-acid sequence, 709 residues long: DCC-interacting protein 13-alpha (709 aa).

A required for RAB5A binding region spans residues 1–428 (MPGIDKLPIE…RPPTARTSSS (428 aa)). The region spanning 3–268 (GIDKLPIEET…DPLYVPDPDP (266 aa)) is the BAR domain. The stretch at 215 to 259 (SENLNEQLEEFLANIGTSVQNVRREMDSDIETMQQTIEDLEVASD) forms a coiled coil. A PH domain is found at 277–375 (LTRKAGYLNA…WICTINNISK (99 aa)). Disordered stretches follow at residues 397-434 (AVTPSPSFQQRHESLRPAAGQSRPPTARTSSSGSLGSE), 467-491 (GQAKAFGQGGRRTNPFGESGGSTKS), and 645-709 (VKEK…ESEA). At Thr-399 the chain carries Phosphothreonine. Ser-401 carries the phosphoserine modification. A F&amp;H motif is present at residues 403–414 (SFQQRHESLRPA). A Phosphoserine; by PKA modification is found at Ser-410. In terms of domain architecture, PID spans 496 to 656 (SILHQLFIVR…EKQQKELNKQ (161 aa)). A coiled-coil region spans residues 621–673 (LAKQIALHAELDRRASEKQKEIERVKEKQQKELNKQKQIEKDLEEQSRLIAAS). A compositionally biased stretch (basic and acidic residues) spans 645-667 (VKEKQQKELNKQKQIEKDLEEQS). The span at 674–693 (SRPNQASSEGQFVVLSSSQS) shows a compositional bias: polar residues. Phosphoserine occurs at positions 693 and 696. A compositionally biased stretch (basic and acidic residues) spans 700 to 709 (EGGKKRESEA).

In terms of assembly, homodimer. Binds RAB5A/Rab5 through an N-terminal domain. This interaction is essential for its recruitment to endosomal membranes as well as its role in cell proliferation. Binds DCC and the catalytic domain of the inactive form of AKT2 through its PID domain. Binds PIK3CA and subunits of the NuRD/MeCP1 complex. Interacts with OCRL and INPP5B. Interacts with NTRK2. Interacts with APPL2; interaction is independent of follicle stimulating hormone stimulation; interaction is decreased by adiponectin in a time-dependent manner. Forms a complex with APPL2 and RUVBL2. Forms a complex comprising APPL2, RUVBL2, CTNNB1, HDAC1 and HDAC2; interaction reduces interaction between CTNNB1, HDAC1, HDAC2 and RUVBL2 leading to the decrease of deacetylase activity of this complex; affects the recruitment of repressive complexes to the Wnt target genes. Interacts with ANXA2. Interacts with TGFBR1; interaction is TGF beta dependent; mediates trafficking of the TGFBR1 from the endosomes to the nucleus via microtubules in a TRAF6-dependent manner. Interacts with PRKCZ. Interacts with PIK3R1 and APPL2. Interacts with ADIPOR1; ADIPOQ enhances this interaction; inhibites adiponectin-stimulated binding of APPL2 to ADIPOR1. Post-translationally, phosphorylation at Ser-410 by PKA severely impairs binding to OCRL. In terms of tissue distribution, high levels in heart, ovary, pancreas and skeletal muscle.

It is found in the early endosome membrane. It localises to the nucleus. Its subcellular location is the cytoplasm. The protein localises to the endosome. The protein resides in the cell projection. It is found in the ruffle. It localises to the cytoplasmic vesicle. Its subcellular location is the phagosome. Its function is as follows. Multifunctional adapter protein that binds to various membrane receptors, nuclear factors and signaling proteins to regulate many processes, such as cell proliferation, immune response, endosomal trafficking and cell metabolism. Regulates signaling pathway leading to cell proliferation through interaction with RAB5A and subunits of the NuRD/MeCP1 complex. Functions as a positive regulator of innate immune response via activation of AKT1 signaling pathway by forming a complex with APPL1 and PIK3R1. Inhibits Fc-gamma receptor-mediated phagocytosis through PI3K/Akt signaling in macrophages. Regulates TLR4 signaling in activated macrophages. Involved in trafficking of the TGFBR1 from the endosomes to the nucleus via microtubules in a TRAF6-dependent manner. Plays a role in cell metabolism by regulating adiponecting and insulin signaling pathways. Required for fibroblast migration through HGF cell signaling. Positive regulator of beta-catenin/TCF-dependent transcription through direct interaction with RUVBL2/reptin resulting in the relief of RUVBL2-mediated repression of beta-catenin/TCF target genes by modulating the interactions within the beta-catenin-reptin-HDAC complex. In Homo sapiens (Human), this protein is DCC-interacting protein 13-alpha.